A 446-amino-acid polypeptide reads, in one-letter code: MSVAVPFAPSPTGLLHVGNVRLALVNWLFARKAGGNFLVRLDDTDEERSKPEYAEGIERDLTWLGLTWDRFARESDRYGATDEVAAALKASGRLYPCYETPEELNLKRASLSSQGRPPIYDRAALRLGDADRARLEAEGRKPHWRFKLEHTPVEWTDLVRGPVHFEGSALSDPVLIAEDGRPLYTLTSVVDDADLAITHVIRGEDHLANTAVQIQIFEAVGGAVPVFAHLPLLTDATGQGLSKRLGSLSVASLREEEGIEPMALASLLAKLGTSDAIEPRLTLDELVAEFDIAKVSRATPKFDPEELLRLNARILHLLPFERVAGELAASVWMMPTPAFWEAVPNLSRVAEARDWWAVTHAPVARRRTIPLFLAEAATLLPKEPWDLSTWGTWTGAVKAKTGRKGKDLFLPLRRALTGRDHGGQLKNLLPLIGRTRAHKRLAGETA.

Positions 9-19 (PSPTGLLHVGN) match the 'HIGH' region motif. The short motif at 240 to 244 (GLSKR) is the 'KMSKS' region element. Lys-243 is a binding site for ATP.

The protein belongs to the class-I aminoacyl-tRNA synthetase family. Glutamate--tRNA ligase type 1 subfamily. Monomer.

Its subcellular location is the cytoplasm. It catalyses the reaction tRNA(Glu) + L-glutamate + ATP = L-glutamyl-tRNA(Glu) + AMP + diphosphate. Catalyzes the attachment of glutamate to tRNA(Glu) in a two-step reaction: glutamate is first activated by ATP to form Glu-AMP and then transferred to the acceptor end of tRNA(Glu). The sequence is that of Glutamate--tRNA ligase from Azospirillum brasilense.